A 121-amino-acid chain; its full sequence is uncharacterized protein (121 aa).

The span at 12–24 shows a compositional bias: low complexity; sequence EEGGASAAAPDAS. 2 disordered regions span residues 12 to 63 and 101 to 121; these read EEGG…RLEP and KKLA…SPVV. Over residues 26–35 the composition is skewed to basic residues; that stretch reads KSKKGARPCF. Positions 40-49 are enriched in polar residues; it reads QAGSCMTGRQ. The segment covering 112–121 has biased composition (basic and acidic residues); that stretch reads GSQKERSPVV.

This is an uncharacterized protein from Homo sapiens (Human).